A 316-amino-acid chain; its full sequence is Sideroflexin-4 (316 aa).

Transmembrane regions (helical) follow at residues 83–103, 141–161, 174–194, 230–250, and 263–283; these read QVFL…HKGI, LLIL…QIIL, ICRS…NILV, ISRA…MALL, and IAPI…PVSF.

Belongs to the sideroflexin family.

Its subcellular location is the mitochondrion inner membrane. In terms of biological role, mitochondrial amino-acid transporter. Does not act as a serine transporter: not able to mediate transport of serine into mitochondria. This chain is Sideroflexin-4, found in Danio rerio (Zebrafish).